A 236-amino-acid chain; its full sequence is Alanyl-tRNA editing protein AlaX-M (236 aa).

Zn(2+)-binding residues include histidine 101, histidine 105, and histidine 205.

Belongs to the class-II aminoacyl-tRNA synthetase family. Editing domain AlaX-M subfamily. Zn(2+) is required as a cofactor.

The protein resides in the cytoplasm. Functions in trans to edit the amino acid moiety from incorrectly charged Ser-tRNA(Ala). The sequence is that of Alanyl-tRNA editing protein AlaX-M (alaXM) from Saccharolobus solfataricus (strain ATCC 35092 / DSM 1617 / JCM 11322 / P2) (Sulfolobus solfataricus).